The primary structure comprises 217 residues: Thiamine-phosphate synthase (217 aa).

4-amino-2-methyl-5-(diphosphooxymethyl)pyrimidine is bound by residues 44–48 and asparagine 76; that span reads QYREK. Mg(2+)-binding residues include aspartate 77 and aspartate 96. Serine 115 contacts 4-amino-2-methyl-5-(diphosphooxymethyl)pyrimidine. 141-143 is a binding site for 2-[(2R,5Z)-2-carboxy-4-methylthiazol-5(2H)-ylidene]ethyl phosphate; the sequence is TKT. Residue lysine 144 coordinates 4-amino-2-methyl-5-(diphosphooxymethyl)pyrimidine. Residues glycine 172 and 192–193 contribute to the 2-[(2R,5Z)-2-carboxy-4-methylthiazol-5(2H)-ylidene]ethyl phosphate site; that span reads VS.

The protein belongs to the thiamine-phosphate synthase family. Requires Mg(2+) as cofactor.

It carries out the reaction 2-[(2R,5Z)-2-carboxy-4-methylthiazol-5(2H)-ylidene]ethyl phosphate + 4-amino-2-methyl-5-(diphosphooxymethyl)pyrimidine + 2 H(+) = thiamine phosphate + CO2 + diphosphate. The enzyme catalyses 2-(2-carboxy-4-methylthiazol-5-yl)ethyl phosphate + 4-amino-2-methyl-5-(diphosphooxymethyl)pyrimidine + 2 H(+) = thiamine phosphate + CO2 + diphosphate. It catalyses the reaction 4-methyl-5-(2-phosphooxyethyl)-thiazole + 4-amino-2-methyl-5-(diphosphooxymethyl)pyrimidine + H(+) = thiamine phosphate + diphosphate. Its pathway is cofactor biosynthesis; thiamine diphosphate biosynthesis; thiamine phosphate from 4-amino-2-methyl-5-diphosphomethylpyrimidine and 4-methyl-5-(2-phosphoethyl)-thiazole: step 1/1. In terms of biological role, condenses 4-methyl-5-(beta-hydroxyethyl)thiazole monophosphate (THZ-P) and 2-methyl-4-amino-5-hydroxymethyl pyrimidine pyrophosphate (HMP-PP) to form thiamine monophosphate (TMP). In Lawsonia intracellularis (strain PHE/MN1-00), this protein is Thiamine-phosphate synthase.